A 471-amino-acid chain; its full sequence is UDP-glycosyltransferase CGT (471 aa).

The Proton acceptor role is filled by histidine 24. Histidine 24 provides a ligand contact to an anthocyanidin. Aspartate 120 acts as the Charge relay in catalysis. Threonine 143 provides a ligand contact to UDP-alpha-D-glucose. The UDP stretch occupies residues 280–281 (SR). Residues valine 343, glutamine 345, histidine 360, tryptophan 363, asparagine 364, serine 365, and glutamate 368 each coordinate UDP-alpha-D-glucose. Glycine 383 contributes to the an anthocyanidin binding site. Residues aspartate 384 and glutamine 385 each contribute to the UDP-alpha-D-glucose site.

Belongs to the UDP-glycosyltransferase family.

The catalysed reaction is a 3'-hydro-2'-hydroxy-beta-oxodihydrochalcone + UDP-alpha-D-glucose = a 3'-(beta-D-glucopyranosyl)-2'-hydroxy-beta-oxodihydrochalcone + UDP + H(+). Functionally, UDP-glucose-dependent glucosyltransferase catalyzing the c-glucosylation of 2-hydroxyflavanones. In Oryza sativa subsp. japonica (Rice), this protein is UDP-glycosyltransferase CGT.